The chain runs to 548 residues: MLAPVSLLFCLFLQLCPSAQQYHGEKGISVPDHGFCQPISIPLCTDIAYNQTIMPNLLGHTNQEDAGLEVHQFYPLVKVQCSPELRFFLCSMYAPVCTVLEQAIPPCRSLCERARQGCEALMNKFGFQWPERLRCENFPVHGAGEICVGQNTSDNSPSGPTARPTLNLPDSITFQPHPHRDFTCPRQLKVPPYLGYRFLGEKDCGAPCEPGKANGLMYFKEEEVRFARLWVGIWAILCGISTLFTVLTYLVDMRRFSYPERPIIFLSGCYFMVAVAYTAGFLLEERAVCVERFSEDSYRTVAQGTKKEGCTILFMILYFFGMASSIWWVILALTWFLSAGMKWGHEAIEANSQYFHLAAWAVPAVKTITILAMGQVDGDVLSGVCYVGINSVDSLRGFVLAPLFVYLFLGTSFLLAGFVSLFRIRTIMKHDGTKTEKLEKLMVRIGVFSVMYTVPATIVLACYFYEQAFRDTWEKTWLVHTCKGYAVPCPNYNFAPMSPDFTVFMIKYLMTMIVGITSSFWIWSGKTLQSWRRFYHRLGNGSKGETAV.

The first 18 residues, 1 to 18 (MLAPVSLLFCLFLQLCPS), serve as a signal peptide directing secretion. Over 19–230 (AQQYHGEKGI…EEEVRFARLW (212 aa)) the chain is Extracellular. The FZ domain maps to 31-150 (PDHGFCQPIS…HGAGEICVGQ (120 aa)). 5 disulfide bridges follow: Cys-36/Cys-97, Cys-44/Cys-90, Cys-81/Cys-118, Cys-107/Cys-147, and Cys-111/Cys-135. The N-linked (GlcNAc...) asparagine glycan is linked to Asn-50. Asn-151 carries N-linked (GlcNAc...) asparagine glycosylation. Residues 231 to 251 (VGIWAILCGISTLFTVLTYLV) traverse the membrane as a helical segment. The Cytoplasmic portion of the chain corresponds to 252–262 (DMRRFSYPERP). The helical transmembrane segment at 263 to 283 (IIFLSGCYFMVAVAYTAGFLL) threads the bilayer. The Extracellular segment spans residues 284–311 (EERAVCVERFSEDSYRTVAQGTKKEGCT). The chain crosses the membrane as a helical span at residues 312–332 (ILFMILYFFGMASSIWWVILA). Topologically, residues 333–353 (LTWFLSAGMKWGHEAIEANSQ) are cytoplasmic. A helical membrane pass occupies residues 354–374 (YFHLAAWAVPAVKTITILAMG). Residues 375–397 (QVDGDVLSGVCYVGINSVDSLRG) lie on the Extracellular side of the membrane. A helical membrane pass occupies residues 398 to 418 (FVLAPLFVYLFLGTSFLLAGF). The Cytoplasmic portion of the chain corresponds to 419–444 (VSLFRIRTIMKHDGTKTEKLEKLMVR). The helical transmembrane segment at 445–465 (IGVFSVMYTVPATIVLACYFY) threads the bilayer. At 466–502 (EQAFRDTWEKTWLVHTCKGYAVPCPNYNFAPMSPDFT) the chain is on the extracellular side. A helical transmembrane segment spans residues 503-523 (VFMIKYLMTMIVGITSSFWIW). Topologically, residues 524–548 (SGKTLQSWRRFYHRLGNGSKGETAV) are cytoplasmic. A Lys-Thr-X-X-X-Trp motif, mediates interaction with the PDZ domain of Dvl family members motif is present at residues 526–531 (KTLQSW). The short motif at 546-548 (TAV) is the PDZ-binding element.

This sequence belongs to the G-protein coupled receptor Fz/Smo family. As to quaternary structure, interacts with wnt11 and sdc4. The extracellular domain interacts with the extracellular domain of pcdh8/papc. Interacts (via C-terminus) with dvl1 (via PDZ domain). During gastrulation, broadly expressed on the dorsal side of the embryo in deep mesodermal cells surrounding the blastopore lip and in presumptive anterior neuroectoderm. During neurulation, localized to the cranial neural crest and heart field where expression is retained at later stages in addition to new areas of expression in the neural tube, pronephros and tailbud. At tailbud stage, expressed in the pronephric duct, and broad head expression becomes more restricted to the hindbrain. In tadpoles, strongly expressed in the eye and the pericardium and myocardium of the developing heart.

The protein localises to the cell membrane. The protein resides in the endosome membrane. In terms of biological role, receptor for Wnt proteins. Acts in both canonical and non-canonical Wnt pathways. Although different papers report differing Wnt preferences, wnt5a, wnt8b and wnt11 have been proposed as synergists. In the canonical Wnt pathway, acts via beta-catenin to promote the expression of the dorsal genes siamois, twin and nodal3 and to establish the dorsal axis of the embryo and induce dorsal mesoderm formation. In a non-canonical Wnt/planar cell polarity (PCP) pathway, acts with sdc4 and dvl2/dsh to regulate convergent extension cell movements during gastrulation. Triggers phosphorylation of dvl2/dsh and its translocation to the plasma membrane. In a third branch of Wnt signaling, acts in a non-canonical pathway via trimeric G proteins, and independently of dvl2/dsh, to recruit protein kinase C (PKC) to the membrane and thus activate PKC. PKC signaling controls cell sorting and tissue separation during gastrulation. This is Frizzled-7-B (fzd7-b) from Xenopus laevis (African clawed frog).